Here is a 204-residue protein sequence, read N- to C-terminus: Thiamine-phosphate synthase (204 aa).

Residues 32 to 36 (QLRMK) and Asp64 contribute to the 4-amino-2-methyl-5-(diphosphooxymethyl)pyrimidine site. Mg(2+) is bound by residues Asp65 and Asp84. Residue Thr103 participates in 4-amino-2-methyl-5-(diphosphooxymethyl)pyrimidine binding. 129–131 (TTT) lines the 2-[(2R,5Z)-2-carboxy-4-methylthiazol-5(2H)-ylidene]ethyl phosphate pocket. Lys132 lines the 4-amino-2-methyl-5-(diphosphooxymethyl)pyrimidine pocket. Position 165 (Gly165) interacts with 2-[(2R,5Z)-2-carboxy-4-methylthiazol-5(2H)-ylidene]ethyl phosphate.

It belongs to the thiamine-phosphate synthase family. It depends on Mg(2+) as a cofactor.

It catalyses the reaction 2-[(2R,5Z)-2-carboxy-4-methylthiazol-5(2H)-ylidene]ethyl phosphate + 4-amino-2-methyl-5-(diphosphooxymethyl)pyrimidine + 2 H(+) = thiamine phosphate + CO2 + diphosphate. It carries out the reaction 2-(2-carboxy-4-methylthiazol-5-yl)ethyl phosphate + 4-amino-2-methyl-5-(diphosphooxymethyl)pyrimidine + 2 H(+) = thiamine phosphate + CO2 + diphosphate. The catalysed reaction is 4-methyl-5-(2-phosphooxyethyl)-thiazole + 4-amino-2-methyl-5-(diphosphooxymethyl)pyrimidine + H(+) = thiamine phosphate + diphosphate. It functions in the pathway cofactor biosynthesis; thiamine diphosphate biosynthesis; thiamine phosphate from 4-amino-2-methyl-5-diphosphomethylpyrimidine and 4-methyl-5-(2-phosphoethyl)-thiazole: step 1/1. Functionally, condenses 4-methyl-5-(beta-hydroxyethyl)thiazole monophosphate (THZ-P) and 2-methyl-4-amino-5-hydroxymethyl pyrimidine pyrophosphate (HMP-PP) to form thiamine monophosphate (TMP). The protein is Thiamine-phosphate synthase of Bacteroides fragilis (strain ATCC 25285 / DSM 2151 / CCUG 4856 / JCM 11019 / LMG 10263 / NCTC 9343 / Onslow / VPI 2553 / EN-2).